We begin with the raw amino-acid sequence, 1338 residues long: Aldehyde oxidase (1338 aa).

Positions 5–92 (SELLFYVNGR…GAAVTTVEGI (88 aa)) constitute a 2Fe-2S ferredoxin-type domain. [2Fe-2S] cluster is bound by residues C44, C49, C52, and C74. Mo-molybdopterin is bound at residue Q113. 4 residues coordinate [2Fe-2S] cluster: C114, C117, C149, and C151. Position 151 (C151) interacts with Mo-molybdopterin. The FAD-binding PCMH-type domain maps to 236 to 421 (FGSERMMWFS…VSVNIPYSRK (186 aa)). FAD is bound by residues 264 to 271 (VIMGNTSV), A345, S354, H358, D367, and L411. Residues 806–807 (AF) and M1047 contribute to the Mo-molybdopterin site. S1068 is subject to Phosphoserine. Residues 1088-1091 (GSVV), Q1203, and L1268 contribute to the Mo-molybdopterin site. E1270 (proton acceptor; for azaheterocycle hydroxylase activity) is an active-site residue.

The protein belongs to the xanthine dehydrogenase family. In terms of assembly, homodimer. [2Fe-2S] cluster serves as cofactor. Requires FAD as cofactor. Mo-molybdopterin is required as a cofactor. As to expression, abundant in liver, expressed in adipose tissue and at lower levels in lung, skeletal muscle, pancreas. In contrast to mice, no significant gender difference in AOX1 expression level (at protein level).

The protein resides in the cytoplasm. The enzyme catalyses an aldehyde + O2 + H2O = a carboxylate + H2O2 + H(+). It catalyses the reaction retinal + O2 + H2O = retinoate + H2O2 + H(+). With respect to regulation, is very potently inhibited by raloxifene. Also inhibited by estradiol, ethinyl estradiol, hydralazine, menadione, isovanillin and thioridazine. Not inhibited by allopurinol, a xanthine dehydrogenase potent inhibitor. Functionally, oxidase with broad substrate specificity, oxidizing aromatic azaheterocycles, such as N1-methylnicotinamide, N-methylphthalazinium and phthalazine, as well as aldehydes, such as benzaldehyde, retinal, pyridoxal, and vanillin. Plays a key role in the metabolism of xenobiotics and drugs containing aromatic azaheterocyclic substituents. Participates in the bioactivation of prodrugs such as famciclovir, catalyzing the oxidation step from 6-deoxypenciclovir to penciclovir, which is a potent antiviral agent. Is probably involved in the regulation of reactive oxygen species homeostasis. May be a prominent source of superoxide generation via the one-electron reduction of molecular oxygen. May also catalyze nitric oxide (NO) production via the reduction of nitrite to NO with NADH or aldehyde as electron donor. May play a role in adipogenesis. The protein is Aldehyde oxidase of Homo sapiens (Human).